The chain runs to 875 residues: Alanine--tRNA ligase (875 aa).

His567, His571, Cys669, and His673 together coordinate Zn(2+).

Belongs to the class-II aminoacyl-tRNA synthetase family. Zn(2+) serves as cofactor.

It is found in the cytoplasm. The catalysed reaction is tRNA(Ala) + L-alanine + ATP = L-alanyl-tRNA(Ala) + AMP + diphosphate. Functionally, catalyzes the attachment of alanine to tRNA(Ala) in a two-step reaction: alanine is first activated by ATP to form Ala-AMP and then transferred to the acceptor end of tRNA(Ala). Also edits incorrectly charged Ser-tRNA(Ala) and Gly-tRNA(Ala) via its editing domain. This Geobacter sulfurreducens (strain ATCC 51573 / DSM 12127 / PCA) protein is Alanine--tRNA ligase.